We begin with the raw amino-acid sequence, 525 residues long: MRFLRFLKIFFTVIRFGLDEMMLSRVNDRRVRLLLRITTIGRKFDAPPGVRLRLALESLGPIFVKFGQVLSTRRDLLPVDIANELAKLQDQVPPFDSAVAIGLVEKSLGAPVDVLFDDFERVPVASASIAQVHFATVKAGQHAGKAVAVKVLRPNMLPVIDSDLALLRDIAVWAERLWADGKRLKPREVVAEFDKYLHDELDLMREAANGSQLRRNFAGLDLLLVPEMYWEFCTPTVLVMERMVGVPISQVETLRAAGVDIPKLAREGVEIFFTQVFRDGFFHADMHPGNIQVSLDPAHFGRYIALDFGIIGALSDFDKNYLAQNFLAFFKRDYHRVATLHLESGWVPPTTRVEELESAIRAVCEPYFDRALKDISLGQVLMRLFSTSRRFNVEIQPQLVLLQKTMLNVEGLGRSLDPELDLWKTAKPYLERWMNEQIGLRGWYERLKIEAPQWSKTLPQLPRLIHHALAERHDHTRGANDEMIRQILLEQKRTNRLLQGLLLFGVAVGVGAALARVFLALAYGG.

The Protein kinase domain occupies Asp-118–Gly-500. ATP is bound by residues Val-124–Val-132 and Lys-150. The active-site Proton acceptor is Asp-285. A helical membrane pass occupies residues Leu-501–Leu-521.

Belongs to the ABC1 family. UbiB subfamily.

Its subcellular location is the cell inner membrane. It functions in the pathway cofactor biosynthesis; ubiquinone biosynthesis [regulation]. In terms of biological role, is probably a protein kinase regulator of UbiI activity which is involved in aerobic coenzyme Q (ubiquinone) biosynthesis. This Paraburkholderia xenovorans (strain LB400) protein is Probable protein kinase UbiB.